Consider the following 183-residue polypeptide: Phosphinothricin N-acetyltransferase (183 aa).

Residues 8–169 enclose the N-acetyltransferase domain; the sequence is VEIRPATAAD…DVGFWQRDFE (162 aa). Acetyl-CoA contacts are provided by residues 91–93, 99–104, and N130; these read VYV and RLGLGS.

It belongs to the acetyltransferase family. PAT/BAR subfamily.

The catalysed reaction is phosphinothricin + acetyl-CoA = N-acetylphosphinothricin + CoA + H(+). Inactivates phosphinothricin (PPT) by transfer of an acetyl group from acetyl CoA. This enzyme is an effector of phosphinothricin tripeptide (PTT or bialaphos) resistance. The chain is Phosphinothricin N-acetyltransferase from Streptomyces viridochromogenes (strain DSM 40736 / JCM 4977 / BCRC 1201 / Tue 494).